Consider the following 218-residue polypeptide: Thiopurine S-methyltransferase (218 aa).

S-adenosyl-L-methionine contacts are provided by W10, L45, E66, and R123.

The protein belongs to the class I-like SAM-binding methyltransferase superfamily. TPMT family.

It localises to the cytoplasm. It catalyses the reaction S-adenosyl-L-methionine + a thiopurine = S-adenosyl-L-homocysteine + a thiopurine S-methylether.. The sequence is that of Thiopurine S-methyltransferase from Shewanella loihica (strain ATCC BAA-1088 / PV-4).